The following is a 460-amino-acid chain: ESX-1 secretion-associated protein EspB (460 aa).

3 disordered regions span residues 92–116 (LDND…SAEL), 303–335 (PSDG…PADT), and 405–441 (LGGG…TEDR).

In terms of processing, cleaved in the C-terminal region by MycP1.

Its subcellular location is the secreted. The chain is ESX-1 secretion-associated protein EspB from Mycobacterium tuberculosis (strain CDC 1551 / Oshkosh).